Reading from the N-terminus, the 488-residue chain is 1-hydroxycarotenoid 3,4-desaturase (488 aa).

FAD contacts are provided by residues glutamate 31, lysine 39, 55–56 (SL), valine 247, asparagine 275, leucine 431, glycine 461, and 468–469 (GI).

This sequence belongs to the carotenoid/retinoid oxidoreductase family. In terms of assembly, monomer.

The enzyme catalyses rhodopin + A = (3E)-3,4-didehydrorhodopin + AH2. The catalysed reaction is 1'-hydroxy-gamma-carotene + A = 1'-hydroxytorulene + AH2. It catalyses the reaction 1-hydroxy-all-trans-1,2-dihydro-neurosporene + A = demethylspheroidene + AH2. It carries out the reaction 1,1'-dihydroxy-1,1',2,2'-tetrahydroneurosporene + A = 1'-hydroxy-demethylspheroidene + AH2. The enzyme catalyses 1,1'-dihydroxy-1,1',2,2'-tetrahydrolycopene + A = 1,1'-dihydroxy-3,4-didehydro-1,2-dihydrolycopene + AH2. It functions in the pathway carotenoid biosynthesis. Functionally, catalyzes the introduction of a C-3,4 double bond into 1'-hydroxy-gamma-carotene and rhodopin (1-hydroxylycopene) to yield 1'-hydroxytorulene and (3E)-3,4-didehydrorhodopin, respectively. Can also 1-hydroxy-all-trans-1,2-dihydro-neurosporene, 1,1'-dihydroxy-1,1',2,2'-tetrahydroneurosporene and 1,1'-dihydroxy-1,1',2,2'-tetrahydrolycopene. Probably involved in the synthesis of myxol, a gamma-carotene derivative. May use FAD as a proton acceptor. The chain is 1-hydroxycarotenoid 3,4-desaturase from Flavobacterium sp. (strain P99-3).